The sequence spans 165 residues: Ubiquitin-conjugating enzyme E2 G2 (165 aa).

N-acetylalanine is present on Ala-2. The 161-residue stretch at 4 to 164 folds into the UBC core domain; sequence TALKRLMAEY…AKQIVQKSLG (161 aa). The active-site Glycyl thioester intermediate is the Cys-89.

The protein belongs to the ubiquitin-conjugating enzyme family. Interacts with AUP1 (via C-terminus); the interaction recruits UBE2G2 to lipid droplets. Interacts with ubiquitin ligases AMFR/gp78 and RNF139/TRC8; recruitment to lipid droplets by AUP1 facilitates interaction of UBE2G2 with AMFR and RNF139, leading to sterol-induced ubiquitination of 3-hydroxy-3-methylglutaryl coenzyme A reductase and its subsequent proteasomal degradation.

Its subcellular location is the endoplasmic reticulum. It localises to the lipid droplet. The enzyme catalyses S-ubiquitinyl-[E1 ubiquitin-activating enzyme]-L-cysteine + [E2 ubiquitin-conjugating enzyme]-L-cysteine = [E1 ubiquitin-activating enzyme]-L-cysteine + S-ubiquitinyl-[E2 ubiquitin-conjugating enzyme]-L-cysteine.. It functions in the pathway protein modification; protein ubiquitination. Functionally, accepts ubiquitin from the E1 complex and catalyzes its covalent attachment to other proteins. In vitro catalyzes 'Lys-48'-linked polyubiquitination. Involved in endoplasmic reticulum-associated degradation (ERAD). Required for sterol-induced ubiquitination of 3-hydroxy-3-methylglutaryl coenzyme A reductase and its subsequent proteasomal degradation. This chain is Ubiquitin-conjugating enzyme E2 G2, found in Bos taurus (Bovine).